We begin with the raw amino-acid sequence, 60 residues long: UPF0434 protein YcaR (60 aa).

The protein belongs to the UPF0434 family.

This Escherichia fergusonii (strain ATCC 35469 / DSM 13698 / CCUG 18766 / IAM 14443 / JCM 21226 / LMG 7866 / NBRC 102419 / NCTC 12128 / CDC 0568-73) protein is UPF0434 protein YcaR.